A 126-amino-acid polypeptide reads, in one-letter code: Fumarate reductase subunit C (126 aa).

The next 3 helical transmembrane spans lie at 30–50 (IFVA…GAGG), 64–84 (VVVV…VTWF), and 105–125 (VLAG…WMVL).

It belongs to the FrdC family. Part of an enzyme complex containing four subunits: a flavoprotein (FrdA), an iron-sulfur protein (FrdB), and two hydrophobic anchor proteins (FrdC and FrdD).

The protein localises to the cell membrane. In terms of biological role, anchors the catalytic components of the fumarate reductase complex to the cell membrane, binds quinones. In Mycobacterium tuberculosis (strain CDC 1551 / Oshkosh), this protein is Fumarate reductase subunit C.